The sequence spans 349 residues: N-acetyl-gamma-glutamyl-phosphate reductase (349 aa).

C149 is an active-site residue.

The protein belongs to the NAGSA dehydrogenase family. Type 1 subfamily.

The protein localises to the cytoplasm. The catalysed reaction is N-acetyl-L-glutamate 5-semialdehyde + phosphate + NADP(+) = N-acetyl-L-glutamyl 5-phosphate + NADPH + H(+). It participates in amino-acid biosynthesis; L-arginine biosynthesis; N(2)-acetyl-L-ornithine from L-glutamate: step 3/4. In terms of biological role, catalyzes the NADPH-dependent reduction of N-acetyl-5-glutamyl phosphate to yield N-acetyl-L-glutamate 5-semialdehyde. This chain is N-acetyl-gamma-glutamyl-phosphate reductase, found in Acinetobacter baylyi (strain ATCC 33305 / BD413 / ADP1).